We begin with the raw amino-acid sequence, 245 residues long: rRNA adenine N-6-methyltransferase (245 aa).

Residues N10, L12, G37, E58, D83, and S100 each contribute to the S-adenosyl-L-methionine site.

Belongs to the class I-like SAM-binding methyltransferase superfamily. rRNA adenine N(6)-methyltransferase family.

It catalyses the reaction adenosine(2085) in 23S rRNA + 2 S-adenosyl-L-methionine = N(6)-dimethyladenosine(2085) in 23S rRNA + 2 S-adenosyl-L-homocysteine + 2 H(+). In terms of biological role, this protein produces a dimethylation of the adenine residue at position 2085 in 23S rRNA, resulting in reduced affinity between ribosomes and macrolide-lincosamide-streptogramin B antibiotics. In Streptococcus sanguinis, this protein is rRNA adenine N-6-methyltransferase.